We begin with the raw amino-acid sequence, 323 residues long: tRNA U34 carboxymethyltransferase (323 aa).

Carboxy-S-adenosyl-L-methionine-binding positions include lysine 91, tryptophan 105, lysine 110, glycine 130, 152-154 (DPS), 181-182 (IE), methionine 196, tyrosine 200, and arginine 315.

Belongs to the class I-like SAM-binding methyltransferase superfamily. CmoB family. In terms of assembly, homotetramer.

It carries out the reaction carboxy-S-adenosyl-L-methionine + 5-hydroxyuridine(34) in tRNA = 5-carboxymethoxyuridine(34) in tRNA + S-adenosyl-L-homocysteine + H(+). Its function is as follows. Catalyzes carboxymethyl transfer from carboxy-S-adenosyl-L-methionine (Cx-SAM) to 5-hydroxyuridine (ho5U) to form 5-carboxymethoxyuridine (cmo5U) at position 34 in tRNAs. The chain is tRNA U34 carboxymethyltransferase from Vibrio campbellii (strain ATCC BAA-1116).